A 147-amino-acid polypeptide reads, in one-letter code: MKCGKPVDYRYGEHTADVLIQAYGCTLEEAFKNAAIALAELTYHTEKVEPRYAKEITIDYNDLEGLLFRWIDELLFLFDTEKFAISREIVLNLGKNDVYYIKAVLYGEPYDIEKHGFTGLIVKAMTFHMMEIRQIDDYWMLQYVVDV.

The Ca(2+) site is built by Asp-17, Asp-146, and Val-147.

The protein belongs to the archease family.

In terms of biological role, activates the tRNA-splicing ligase complex by facilitating the enzymatic turnover of catalytic subunit RtcB. Acts by promoting the guanylylation of RtcB, a key intermediate step in tRNA ligation. Can also alter the NTP specificity of RtcB such that ATP, dGTP or ITP is used efficiently. The protein is Protein archease of Pyrobaculum islandicum (strain DSM 4184 / JCM 9189 / GEO3).